We begin with the raw amino-acid sequence, 347 residues long: Holliday junction branch migration complex subunit RuvB (347 aa).

Positions 1-10 (MAIVSSSSGR) are enriched in polar residues. The interval 1–29 (MAIVSSSSGRKSPCRETALVDPQPAPEEQ) is disordered. The interval 13-198 (PCRETALVDP…FGLIQRLEFY (186 aa)) is large ATPase domain (RuvB-L). ATP-binding residues include Leu-37, Arg-38, Gly-79, Lys-82, Thr-83, Thr-84, Arg-188, Tyr-198, and Arg-235. A Mg(2+)-binding site is contributed by Thr-83. The interval 199-270 (GQTDLEAIVA…MVAEALSLHR (72 aa)) is small ATPAse domain (RuvB-S). Residues 273–347 (HRGLDASDRR…AARSHIAEAA (75 aa)) form a head domain (RuvB-H) region. The DNA site is built by Arg-328 and Arg-333.

It belongs to the RuvB family. In terms of assembly, homohexamer. Forms an RuvA(8)-RuvB(12)-Holliday junction (HJ) complex. HJ DNA is sandwiched between 2 RuvA tetramers; dsDNA enters through RuvA and exits via RuvB. An RuvB hexamer assembles on each DNA strand where it exits the tetramer. Each RuvB hexamer is contacted by two RuvA subunits (via domain III) on 2 adjacent RuvB subunits; this complex drives branch migration. In the full resolvosome a probable DNA-RuvA(4)-RuvB(12)-RuvC(2) complex forms which resolves the HJ.

The protein localises to the cytoplasm. The catalysed reaction is ATP + H2O = ADP + phosphate + H(+). The RuvA-RuvB-RuvC complex processes Holliday junction (HJ) DNA during genetic recombination and DNA repair, while the RuvA-RuvB complex plays an important role in the rescue of blocked DNA replication forks via replication fork reversal (RFR). RuvA specifically binds to HJ cruciform DNA, conferring on it an open structure. The RuvB hexamer acts as an ATP-dependent pump, pulling dsDNA into and through the RuvAB complex. RuvB forms 2 homohexamers on either side of HJ DNA bound by 1 or 2 RuvA tetramers; 4 subunits per hexamer contact DNA at a time. Coordinated motions by a converter formed by DNA-disengaged RuvB subunits stimulates ATP hydrolysis and nucleotide exchange. Immobilization of the converter enables RuvB to convert the ATP-contained energy into a lever motion, pulling 2 nucleotides of DNA out of the RuvA tetramer per ATP hydrolyzed, thus driving DNA branch migration. The RuvB motors rotate together with the DNA substrate, which together with the progressing nucleotide cycle form the mechanistic basis for DNA recombination by continuous HJ branch migration. Branch migration allows RuvC to scan DNA until it finds its consensus sequence, where it cleaves and resolves cruciform DNA. In Synechococcus sp. (strain CC9902), this protein is Holliday junction branch migration complex subunit RuvB.